Here is an 87-residue protein sequence, read N- to C-terminus: Small ribosomal subunit protein bS20 (87 aa).

The protein belongs to the bacterial ribosomal protein bS20 family.

In terms of biological role, binds directly to 16S ribosomal RNA. The chain is Small ribosomal subunit protein bS20 from Mycoplasma pneumoniae (strain ATCC 29342 / M129 / Subtype 1) (Mycoplasmoides pneumoniae).